The sequence spans 94 residues: DNA-directed RNA polymerase subunit Rpo11 (94 aa).

This sequence belongs to the archaeal Rpo11/eukaryotic RPB11/RPC19 RNA polymerase subunit family. As to quaternary structure, part of the RNA polymerase complex.

Its subcellular location is the cytoplasm. It carries out the reaction RNA(n) + a ribonucleoside 5'-triphosphate = RNA(n+1) + diphosphate. In terms of biological role, DNA-dependent RNA polymerase (RNAP) catalyzes the transcription of DNA into RNA using the four ribonucleoside triphosphates as substrates. This chain is DNA-directed RNA polymerase subunit Rpo11, found in Halobacterium salinarum (strain ATCC 700922 / JCM 11081 / NRC-1) (Halobacterium halobium).